A 307-amino-acid chain; its full sequence is MVTQDIPAVDIGFTHEDFAALLDQYDYHFNPGDTVVGTVFNLEPRGALIDIGAKTAAFLPVQEMSINRVESPEEVLQPSEMREFFILSDENEDGQLTLSIRRIEYMRAWERVRQLQTEDATVRSEVFATNRGGALVRIEGLRGFIPGSHISTRKAKEDLVGEELPLKFLEVDEDRNRLVLSHRRALVERKMNRLEVGEVVVGAVRGIKPYGAFIDIGGVSGLLHISEISHDHIETPHSVFNVNDEVKVMIIDLDAERGRISLSTKQLEPEPGDMVRNPEVVYEKAEEMAAQYREKLKQQAEGLVVTE.

3 S1 motif domains span residues glycine 32–arginine 101, aspartate 119–arginine 183, and glycine 197–lysine 265.

The protein belongs to the bacterial ribosomal protein bS1 family.

Binds mRNA. This chain is Small ribosomal subunit protein bS1 (rpsA), found in Synechococcus sp. (strain ATCC 27144 / PCC 6301 / SAUG 1402/1) (Anacystis nidulans).